A 286-amino-acid polypeptide reads, in one-letter code: Foldase protein PrsA 1 (286 aa).

The signal sequence occupies residues Met-1–Ala-18. Cys-19 is lipidated: N-palmitoyl cysteine. A lipid anchor (S-diacylglycerol cysteine) is attached at Cys-19. The PpiC domain occupies Lys-130–Asp-220.

It belongs to the PrsA family.

Its subcellular location is the cell membrane. It carries out the reaction [protein]-peptidylproline (omega=180) = [protein]-peptidylproline (omega=0). Functionally, plays a major role in protein secretion by helping the post-translocational extracellular folding of several secreted proteins. The polypeptide is Foldase protein PrsA 1 (prsA1) (Bacillus cereus (strain ATCC 14579 / DSM 31 / CCUG 7414 / JCM 2152 / NBRC 15305 / NCIMB 9373 / NCTC 2599 / NRRL B-3711)).